We begin with the raw amino-acid sequence, 321 residues long: tRNA U34 carboxymethyltransferase (321 aa).

Carboxy-S-adenosyl-L-methionine contacts are provided by residues Lys90, Trp104, Lys109, Gly129, 151 to 153, 180 to 181, Met195, Tyr199, and Arg314; these read DPT and IE.

This sequence belongs to the class I-like SAM-binding methyltransferase superfamily. CmoB family. In terms of assembly, homotetramer.

The enzyme catalyses carboxy-S-adenosyl-L-methionine + 5-hydroxyuridine(34) in tRNA = 5-carboxymethoxyuridine(34) in tRNA + S-adenosyl-L-homocysteine + H(+). In terms of biological role, catalyzes carboxymethyl transfer from carboxy-S-adenosyl-L-methionine (Cx-SAM) to 5-hydroxyuridine (ho5U) to form 5-carboxymethoxyuridine (cmo5U) at position 34 in tRNAs. In Mannheimia succiniciproducens (strain KCTC 0769BP / MBEL55E), this protein is tRNA U34 carboxymethyltransferase.